We begin with the raw amino-acid sequence, 319 residues long: Probable cystathionine gamma-synthase (319 aa).

Lys197 carries the N6-(pyridoxal phosphate)lysine modification.

It belongs to the trans-sulfuration enzymes family. As to quaternary structure, homotetramer. Pyridoxal 5'-phosphate serves as cofactor.

Its subcellular location is the cytoplasm. The catalysed reaction is O-succinyl-L-homoserine + L-cysteine = L,L-cystathionine + succinate + H(+). In terms of biological role, catalyzes the formation of L-cystathionine from O-succinyl-L-homoserine (OSHS) and L-cysteine, via a gamma-replacement reaction. In the absence of thiol, catalyzes gamma-elimination to form 2-oxobutanoate, succinate and ammonia. The polypeptide is Probable cystathionine gamma-synthase (metB) (Herpetosiphon aurantiacus (Herpetosiphon giganteus)).